Here is a 1284-residue protein sequence, read N- to C-terminus: Integrator complex subunit 6 (1284 aa).

Positions 3–134 (IILFLVDTSS…PSVIIVITDG (132 aa)) constitute a VWFA domain. Disordered stretches follow at residues 653 to 824 (DVAP…GMSN), 864 to 895 (ETGETEAVPGGASLPGASSANEPSSIGASPAV), 1053 to 1086 (TSSGSSVGAGASNSNLNGNGSTESGGGVSSDDHA), and 1125 to 1180 (NNSS…PGQS). The span at 690-721 (SPGGGSGPGMPGMPGMGGGMSGLMLGAGGSGG) shows a compositional bias: gly residues. 2 stretches are compositionally biased toward low complexity: residues 752–781 (DSRSSSSGSESSTTGSAPGSPIPGATSSIS) and 803–824 (NSNSSFVSSTSEASASDSGMSN). The span at 879–890 (GASSANEPSSIG) shows a compositional bias: polar residues. 2 stretches are compositionally biased toward low complexity: residues 1053-1074 (TSSGSSVGAGASNSNLNGNGST) and 1125-1141 (NNSSAAGAASGSTLSNN). The segment covering 1159–1171 (INSSCGSSPTHNN) has biased composition (polar residues).

Belongs to the Integrator subunit 6 family. As to quaternary structure, belongs to the multiprotein complex Integrator, at least composed of IntS1, IntS2, IntS3, IntS4, omd/IntS5, IntS6, defl/IntS7, IntS8, IntS9, IntS10, IntS11, IntS12, asun/IntS13, IntS14 and IntS15. The core complex associates with protein phosphatase 2A subunits mts/PP2A and Pp2A-29B, to form the Integrator-PP2A (INTAC) complex.

It localises to the nucleus. In terms of biological role, component of the integrator complex, a multiprotein complex that terminates RNA polymerase II (Pol II) transcription in the promoter-proximal region of genes. The integrator complex provides a quality checkpoint during transcription elongation by driving premature transcription termination of transcripts that are unfavorably configured for transcriptional elongation: the complex terminates transcription by (1) catalyzing dephosphorylation of the C-terminal domain (CTD) of Pol II subunit Polr2A/Rbp1 and Spt5, and (2) degrading the exiting nascent RNA transcript via endonuclease activity. The integrator complex is also involved in the 3'-end processing of the U7 snRNA, and also the spliceosomal snRNAs U1, U2, U4 and U5. Within the integrator complex, IntS6 acts as a substrate adapter for protein phosphatase 2A (PP2A). This chain is Integrator complex subunit 6, found in Drosophila melanogaster (Fruit fly).